The sequence spans 314 residues: Ribonucleoside-diphosphate reductase small subunit (314 aa).

Asp-73, Glu-103, and His-106 together coordinate Fe cation. The active site involves Tyr-110. The chain crosses the membrane as a helical span at residues 160–180 (VLMILIEGIFFSSSFAAIAYL). Positions 166, 200, and 203 each coordinate Fe cation.

The protein belongs to the ribonucleoside diphosphate reductase small chain family. Heterotetramer composed of a homodimer of the large subunit (R1) and a homodimer of the small subunit (R2). Larger multisubunit protein complex are also active, composed of (R1)n(R2)n. Fe cation serves as cofactor.

It localises to the host membrane. The enzyme catalyses a 2'-deoxyribonucleoside 5'-diphosphate + [thioredoxin]-disulfide + H2O = a ribonucleoside 5'-diphosphate + [thioredoxin]-dithiol. Functionally, ribonucleoside-diphosphate reductase holoenzyme provides the precursors necessary for viral DNA synthesis. Allows virus growth in non-dividing cells, as well as reactivation from latency in infected hosts. Catalyzes the biosynthesis of deoxyribonucleotides from the corresponding ribonucleotides. In Bovine herpesvirus 1.1 (strain Cooper) (BoHV-1), this protein is Ribonucleoside-diphosphate reductase small subunit.